The following is a 106-amino-acid chain: uncharacterized protein (106 aa).

It belongs to the csb family.

This is an uncharacterized protein from Dictyostelium discoideum (Social amoeba).